The following is a 326-amino-acid chain: Aspartate carbamoyltransferase catalytic subunit (326 aa).

Residues arginine 55 and threonine 56 each contribute to the carbamoyl phosphate site. Position 83 (lysine 83) interacts with L-aspartate. Arginine 105, histidine 135, and glutamine 138 together coordinate carbamoyl phosphate. Positions 176 and 230 each coordinate L-aspartate. Residues glycine 271 and proline 272 each coordinate carbamoyl phosphate.

It belongs to the aspartate/ornithine carbamoyltransferase superfamily. ATCase family. Heterododecamer (2C3:3R2) of six catalytic PyrB chains organized as two trimers (C3), and six regulatory PyrI chains organized as three dimers (R2).

The enzyme catalyses carbamoyl phosphate + L-aspartate = N-carbamoyl-L-aspartate + phosphate + H(+). It participates in pyrimidine metabolism; UMP biosynthesis via de novo pathway; (S)-dihydroorotate from bicarbonate: step 2/3. Functionally, catalyzes the condensation of carbamoyl phosphate and aspartate to form carbamoyl aspartate and inorganic phosphate, the committed step in the de novo pyrimidine nucleotide biosynthesis pathway. The chain is Aspartate carbamoyltransferase catalytic subunit from Streptomyces coelicolor (strain ATCC BAA-471 / A3(2) / M145).